A 73-amino-acid chain; its full sequence is Large ribosomal subunit protein bL31 (73 aa).

Basic and acidic residues predominate over residues K34–S43. The tract at residues K34–M54 is disordered.

Belongs to the bacterial ribosomal protein bL31 family. Type A subfamily. Part of the 50S ribosomal subunit.

Its function is as follows. Binds the 23S rRNA. The chain is Large ribosomal subunit protein bL31 from Rhodopseudomonas palustris (strain BisA53).